Consider the following 600-residue polypeptide: MSRQGISLRFPLLLLLLSPSPVLPADPGAPAPVNPCCYYPCQHQGICVRFGLDRYQCDCTRTGYYGPNCTIPEIWTWLRTTLRPSPSFVHFLLTHGRWLWDFVNATFIRDKLMRLVLTVRSNLIPSPPTYNVAHDYISWESFSNVSYYTRILPSVPRDCPTPMGTKGKKQLPDAEFLSRRFLLRRKFIPDPQGTNLMFAFFAQHFTHQFFKTSGKMGPGFTKALGHGVDLGHIYGDNLERQYQLRLFKDGKLKYQMLNGEVYPPSVEEAPVLMHYPRGIPPQSQMAVGQEVFGLLPGLMVYATIWLREHNRVCDLLKAEHPTWGDEQLFQTARLILIGETIKIVIEEYVQQLSGYFLQLKFDPELLFGAQFQYRNRIAMEFNQLYHWHPLMPDSFRVGPQDYSYEQFLFNTSMLVDYGVEALVDAFSRQPAGRIGGGRNIDHHILHVAVDVIKESRELRLQPFNEYRKRFGMKPYTSFQELTGEKEMAAELEELYGDIDALEFYPGLLLEKCHPNSIFGESMIEMGAPFSLKGLLGNPICSPEYWKASTFGGDVGFNLVKTATLKKLVCLNTKTCPYVSFHVPDPHREDRPGVERPPTEL.

The N-terminal stretch at 1–24 (MSRQGISLRFPLLLLLLSPSPVLP) is a signal peptide. Positions 32 to 70 (PVNPCCYYPCQHQGICVRFGLDRYQCDCTRTGYYGPNCT) constitute an EGF-like domain. 4 disulfide bridges follow: Cys36–Cys47, Cys37–Cys159, Cys41–Cys57, and Cys59–Cys69. N-linked (GlcNAc...) asparagine glycans are attached at residues Asn68, Asn104, and Asn144. The Proton acceptor role is filled by His207. Tyr385 (for cyclooxygenase activity) is an active-site residue. Residue His388 coordinates heme b. Asn410 carries an N-linked (GlcNAc...) asparagine glycan. Cys569 and Cys575 are oxidised to a cystine.

The protein belongs to the prostaglandin G/H synthase family. As to quaternary structure, homodimer. Heme b is required as a cofactor.

It is found in the microsome membrane. Its subcellular location is the endoplasmic reticulum membrane. It carries out the reaction (5Z,8Z,11Z,14Z)-eicosatetraenoate + AH2 + 2 O2 = prostaglandin H2 + A + H2O. The enzyme catalyses (5Z,8Z,11Z,14Z)-eicosatetraenoate + 2 O2 = prostaglandin G2. The catalysed reaction is prostaglandin G2 + AH2 = prostaglandin H2 + A + H2O. It catalyses the reaction (9Z,12Z)-octadecadienoate + AH2 + O2 = (9R)-hydroxy-(10E,12Z)-octadecadienoate + A + H2O. It carries out the reaction (9Z,12Z)-octadecadienoate + AH2 + O2 = (9S)-hydroxy-(10E,12Z)-octadecadienoate + A + H2O. The enzyme catalyses (9Z,12Z)-octadecadienoate + AH2 + O2 = (13S)-hydroxy-(9Z,11E)-octadecadienoate + A + H2O. The catalysed reaction is (9Z,12Z)-octadecadienoate + AH2 + O2 = (13R)-hydroxy-(9Z,11E)-octadecadienoate + A + H2O. Its pathway is lipid metabolism; prostaglandin biosynthesis. The cyclooxygenase activity is inhibited by nonsteroidal anti-inflammatory drugs (NSAIDs) including ibuprofen, flurbiprofen, ketoprofen, naproxen, flurbiprofen, anirolac, fenclofenac and diclofenac. Functionally, dual cyclooxygenase and peroxidase that plays an important role in the biosynthesis pathway of prostanoids, a class of C20 oxylipins mainly derived from arachidonate ((5Z,8Z,11Z,14Z)-eicosatetraenoate, AA, C20:4(n-6)), with a particular role in the inflammatory response. The cyclooxygenase activity oxygenates AA to the hydroperoxy endoperoxide prostaglandin G2 (PGG2), and the peroxidase activity reduces PGG2 to the hydroxy endoperoxide prostaglandin H2 (PGH2), the precursor of all 2-series prostaglandins and thromboxanes. This complex transformation is initiated by abstraction of hydrogen at carbon 13 (with S-stereochemistry), followed by insertion of molecular O2 to form the endoperoxide bridge between carbon 9 and 11 that defines prostaglandins. The insertion of a second molecule of O2 (bis-oxygenase activity) yields a hydroperoxy group in PGG2 that is then reduced to PGH2 by two electrons. Involved in the constitutive production of prostanoids in particular in the stomach and platelets. In gastric epithelial cells, it is a key step in the generation of prostaglandins, such as prostaglandin E2 (PGE2), which plays an important role in cytoprotection. In platelets, it is involved in the generation of thromboxane A2 (TXA2), which promotes platelet activation and aggregation, vasoconstriction and proliferation of vascular smooth muscle cells. Can also use linoleate (LA, (9Z,12Z)-octadecadienoate, C18:2(n-6)) as substrate and produce hydroxyoctadecadienoates (HODEs) in a regio- and stereospecific manner, being (9R)-HODE ((9R)-hydroxy-(10E,12Z)-octadecadienoate) and (13S)-HODE ((13S)-hydroxy-(9Z,11E)-octadecadienoate) its major products. The polypeptide is Prostaglandin G/H synthase 1 (PTGS1) (Bos taurus (Bovine)).